The chain runs to 180 residues: Insulin-like growth factor 2 (180 aa).

Positions Met1 to Ala24 are cleaved as a signal peptide. The interval Ala25–Phe52 is b. Disulfide bonds link Cys33–Cys71, Cys45–Cys84, and Cys70–Cys75. The interval Ser53–Arg64 is c. The tract at residues Gly65–Ala85 is a. Residues Thr86–Glu91 are d. The propeptide at Arg92–Lys180 is e peptide. 3 O-linked (GalNAc...) threonine glycosylation sites follow: Thr96, Thr99, and Thr163. The tract at residues Leu161–Lys180 is disordered.

The protein belongs to the insulin family. In terms of assembly, interacts with MYORG; this interaction is required for IGF2 secretion. Interacts with integrins ITGAV:ITGB3 and ITGA6:ITGB4; integrin-binding is required for IGF2 signaling. Interacts with IGFBP2. In terms of processing, O-glycosylated with core 1 or possibly core 8 glycans. Thr-96 is a minor glycosylation site compared to Thr-99. Post-translationally, proteolytically processed by PCSK4, proIGF2 is cleaved at Arg-128 and Arg-92 to generate big-IGF2 and mature IGF2. Expressed in heart, placenta, lung, liver, muscle, kidney, tongue, limb, eye and pancreas.

Its subcellular location is the secreted. Functionally, the insulin-like growth factors possess growth-promoting activity. Major fetal growth hormone in mammals. Plays a key role in regulating fetoplacental development. IGF2 is influenced by placental lactogen. Also involved in tissue differentiation. In adults, involved in glucose metabolism in adipose tissue, skeletal muscle and liver. Acts as a ligand for integrin which is required for IGF2 signaling. Positively regulates myogenic transcription factor MYOD1 function by facilitating the recruitment of transcriptional coactivators, thereby controlling muscle terminal differentiation. Inhibits myoblast differentiation and modulates metabolism via increasing the mitochondrial respiration rate. Preptin undergoes glucose-mediated co-secretion with insulin, and acts as a physiological amplifier of glucose-mediated insulin secretion. Exhibits osteogenic properties by increasing osteoblast mitogenic activity through phosphoactivation of MAPK1 and MAPK3. The polypeptide is Insulin-like growth factor 2 (Homo sapiens (Human)).